The primary structure comprises 199 residues: Transcription factor 15 (199 aa).

The interval 25–67 (EENRSESDASDQSFGCCEGPEAARRGPGPGGGRRAGGGGGAGP) is disordered. Gly residues predominate over residues 51-66 (PGPGGGRRAGGGGGAG). The bHLH domain maps to 72 to 124 (RQRQAANARERDRTQSVNTAFTALRTLIPTEPVDRKLSKIETVRLASSYIAHL).

Heterodimer; efficient DNA binding requires dimerization with another bHLH protein, such as TCF3/E12. Interacts with MEOX2.

The protein localises to the nucleus. Early transcription factor that plays a key role in somitogenesis, paraxial mesoderm development and regulation of stem cell pluripotency. Essential for the mesenchymal to epithelial transition associated with somite formation. Required for somite morphogenesis, thereby regulating patterning of the axial skeleton and skeletal muscles. Required for proper localization of somite epithelium markers during the mesenchymal to epithelial transition. Also plays a key role in regulation of stem cell pluripotency. Promotes pluripotency exit of embryonic stem cells (ESCs) by priming ESCs for differentiation. Acts as a key regulator of self-renewal of hematopoietic stem cells (HSCs) by mediating HSCs quiescence and long-term self-renewal. Together with MEOX2, regulates transcription in heart endothelial cells to regulate fatty acid transport across heart endothelial cells. Acts by forming a heterodimer with another helix-loop-helix (bHLH) protein, such as TCF3/E12, that binds DNA on E-box motifs (5'-CANNTG-3') and activates transcription of target genes. This Homo sapiens (Human) protein is Transcription factor 15.